Reading from the N-terminus, the 732-residue chain is Eukaryotic translation initiation factor 3 subunit B (732 aa).

Residues 1-94 form a sufficient for interaction with HCR1 and TIF32 region; the sequence is MTTLESLKIE…LFIEMESVSA (94 aa). Positions 1–219 are sufficient for interaction with PIC8; it reads MTTLESLKIE…GVTSWGGPNF (219 aa). The RRM domain occupies 37–120; that stretch reads NFLVVDGAPV…HRLLVNSLND (84 aa). 4 WD repeats span residues 185–224, 237–280, 439–481, and 507–554; these read ARKN…RLKR, PTEK…LMKT, EMKD…KFFA, and VDQQ…KTLN.

The protein belongs to the eIF-3 subunit B family. As to quaternary structure, component of the eukaryotic translation initiation factor 3 (eIF-3) complex.

The protein localises to the cytoplasm. RNA-binding component of the eukaryotic translation initiation factor 3 (eIF-3) complex, which is involved in protein synthesis of a specialized repertoire of mRNAs and, together with other initiation factors, stimulates binding of mRNA and methionyl-tRNAi to the 40S ribosome. The eIF-3 complex specifically targets and initiates translation of a subset of mRNAs involved in cell proliferation. The chain is Eukaryotic translation initiation factor 3 subunit B from Kluyveromyces lactis (strain ATCC 8585 / CBS 2359 / DSM 70799 / NBRC 1267 / NRRL Y-1140 / WM37) (Yeast).